Reading from the N-terminus, the 167-residue chain is Peptide deformylase (167 aa).

Fe cation-binding residues include Cys-91 and His-133. The active site involves Glu-134. His-137 is a binding site for Fe cation.

Belongs to the polypeptide deformylase family. The cofactor is Fe(2+).

The catalysed reaction is N-terminal N-formyl-L-methionyl-[peptide] + H2O = N-terminal L-methionyl-[peptide] + formate. In terms of biological role, removes the formyl group from the N-terminal Met of newly synthesized proteins. Requires at least a dipeptide for an efficient rate of reaction. N-terminal L-methionine is a prerequisite for activity but the enzyme has broad specificity at other positions. The sequence is that of Peptide deformylase from Buchnera aphidicola subsp. Schizaphis graminum (strain Sg).